We begin with the raw amino-acid sequence, 181 residues long: dTDP-4-dehydrorhamnose 3,5-epimerase (181 aa).

Residues R23, E28, 47–49, and R59 contribute to the substrate site; that span reads QDN. H62 acts as the Proton acceptor in catalysis. Positions 71 and 118 each coordinate substrate. Y131 functions as the Proton donor in the catalytic mechanism. Substrate contacts are provided by E142 and K167.

It belongs to the dTDP-4-dehydrorhamnose 3,5-epimerase family. As to quaternary structure, homodimer.

It carries out the reaction dTDP-4-dehydro-6-deoxy-alpha-D-glucose = dTDP-4-dehydro-beta-L-rhamnose. It participates in carbohydrate biosynthesis; dTDP-L-rhamnose biosynthesis. The protein operates within bacterial outer membrane biogenesis; lipopolysaccharide biosynthesis. Its function is as follows. Catalyzes the epimerization of the C3' and C5'positions of dTDP-6-deoxy-D-xylo-4-hexulose, forming dTDP-6-deoxy-L-lyxo-4-hexulose. The chain is dTDP-4-dehydrorhamnose 3,5-epimerase (rmlC) from Pseudomonas aeruginosa (strain ATCC 15692 / DSM 22644 / CIP 104116 / JCM 14847 / LMG 12228 / 1C / PRS 101 / PAO1).